Consider the following 392-residue polypeptide: 8-amino-7-oxononanoate synthase (392 aa).

A substrate-binding site is contributed by Arg18. Residue Gly105 to Tyr106 coordinates pyridoxal 5'-phosphate. Substrate is bound at residue His130. Pyridoxal 5'-phosphate-binding residues include Ser177, His205, and Thr234. Lys237 carries the post-translational modification N6-(pyridoxal phosphate)lysine. Thr351 is a binding site for substrate.

It belongs to the class-II pyridoxal-phosphate-dependent aminotransferase family. BioF subfamily. As to quaternary structure, homodimer. It depends on pyridoxal 5'-phosphate as a cofactor.

The enzyme catalyses 6-carboxyhexanoyl-[ACP] + L-alanine + H(+) = (8S)-8-amino-7-oxononanoate + holo-[ACP] + CO2. It participates in cofactor biosynthesis; biotin biosynthesis. Catalyzes the decarboxylative condensation of pimeloyl-[acyl-carrier protein] and L-alanine to produce 8-amino-7-oxononanoate (AON), [acyl-carrier protein], and carbon dioxide. This Thioalkalivibrio sulfidiphilus (strain HL-EbGR7) protein is 8-amino-7-oxononanoate synthase.